The primary structure comprises 170 residues: Acireductone dioxygenase (170 aa).

The Fe(2+) site is built by H99, H101, E105, and H144. Ni(2+)-binding residues include H99, H101, E105, and H144.

This sequence belongs to the acireductone dioxygenase (ARD) family. As to quaternary structure, monomer. Fe(2+) is required as a cofactor. Requires Ni(2+) as cofactor.

The catalysed reaction is 1,2-dihydroxy-5-(methylsulfanyl)pent-1-en-3-one + O2 = 3-(methylsulfanyl)propanoate + CO + formate + 2 H(+). It catalyses the reaction 1,2-dihydroxy-5-(methylsulfanyl)pent-1-en-3-one + O2 = 4-methylsulfanyl-2-oxobutanoate + formate + 2 H(+). It participates in amino-acid biosynthesis; L-methionine biosynthesis via salvage pathway; L-methionine from S-methyl-5-thio-alpha-D-ribose 1-phosphate: step 5/6. Functionally, catalyzes 2 different reactions between oxygen and the acireductone 1,2-dihydroxy-3-keto-5-methylthiopentene (DHK-MTPene) depending upon the metal bound in the active site. Fe-containing acireductone dioxygenase (Fe-ARD) produces formate and 2-keto-4-methylthiobutyrate (KMTB), the alpha-ketoacid precursor of methionine in the methionine recycle pathway. Ni-containing acireductone dioxygenase (Ni-ARD) produces methylthiopropionate, carbon monoxide and formate, and does not lie on the methionine recycle pathway. The protein is Acireductone dioxygenase of Bacillus cereus (strain ATCC 14579 / DSM 31 / CCUG 7414 / JCM 2152 / NBRC 15305 / NCIMB 9373 / NCTC 2599 / NRRL B-3711).